Reading from the N-terminus, the 133-residue chain is Small ribosomal subunit protein uS11 (133 aa).

The protein belongs to the universal ribosomal protein uS11 family. As to quaternary structure, part of the 30S ribosomal subunit. Interacts with proteins S7 and S18. Binds to IF-3.

In terms of biological role, located on the platform of the 30S subunit, it bridges several disparate RNA helices of the 16S rRNA. Forms part of the Shine-Dalgarno cleft in the 70S ribosome. This Christiangramia forsetii (strain DSM 17595 / CGMCC 1.15422 / KT0803) (Gramella forsetii) protein is Small ribosomal subunit protein uS11.